Reading from the N-terminus, the 912-residue chain is MASDSDTEEFFDAPEDVNLSCSPAVSPLKSETFILKEEATYSKKAETRNIELKQDDSKEIIDSIIEESQKCSDTENENPVVEEKTEVLHETLIGDSVKTKQDLLSNIPELVVTESTFHDGVEDPLQQQISEYLEPDISRSQDAGPSADSAYVPSAIENIVDLTQDLKITEELKIAEEPEIPLIQEETKDPSKNIVEDVFSKLPTSDIIEQLPPAKPPRQICVEPDIVASTKKSGPNRPPQPINAPPPRPPPPARPAPPPRKKKGDTDFDRSSGFEYQKDGFLAGGLLSPNTLTENMNRDSQPSLDLASATSGEKIVTAQENGKAADGQLSSQSSECLGPQRPRSNSGRELTDDEILASVMIKNLDTGEEIPLSLAEEKLPTGINPLTLYIMRRTKEYVSNDAAQSDDEEKPQSHQSETDGGKLKQKTTQLKKFLGKSVKRAKHLAEEYGERAVNKVKSVRDEVFHTDQDDPSSSDDEGMPYTRPVKFKAAHGFKGPYDFEQIKVVQDLSGEHVGAVWTMKFSHCGRLLASAGQDNVVRIWVLKNAFDYFNNMRIKYNTEGRVSPSPSQESLNSSKSDTDGGVFSGTDDVDPDDKNAPFRQVPFCKYKGHTADLLDLSWSKNYFLLSSSMDKTVRLWHISRRECLCCFQHIDFVTAIAFHPRDDRYFLSGSLDGKLRLWNIPDKKVALWNEIDGQTKLITAANFCQNGKHAVIGTYDGRCIFYDTEHLKYHTQIHVRSTRGRNRVGRKITGIEPLPGENKILVTSNDSRIRLYDLRDLSLSMKYKGCVNSSSQIKASFSHDFTYIVSGSEDKYVYIWSTYHDLSKFTSVRRDRNDFWEGIKAHNAVVTSAIFAPNPGLMVSAETSSEKQEGDQAEPVENIPSGALKSDHTEVLLSADFTGAIKVFINKKKNIS.

3 disordered regions span residues 206-352, 399-426, and 460-481; these read DIIE…ELTD, SNDA…LKQK, and RDEV…GMPY. Residues 236-258 show a composition bias toward pro residues; sequence NRPPQPINAPPPRPPPPARPAPP. The span at 264–278 shows a compositional bias: basic and acidic residues; it reads GDTDFDRSSGFEYQK. The span at 288–311 shows a compositional bias: polar residues; the sequence is SPNTLTENMNRDSQPSLDLASATS. Residues 410–422 are compositionally biased toward basic and acidic residues; it reads KPQSHQSETDGGK. The segment covering 469-478 has biased composition (acidic residues); it reads DDPSSSDDEG. Residues 511–550 form a WD 1 repeat; that stretch reads EHVGAVWTMKFSHCGRLLASAGQDNVVRIWVLKNAFDYFN. A disordered region spans residues 559–594; sequence EGRVSPSPSQESLNSSKSDTDGGVFSGTDDVDPDDK. Residues 563-575 are compositionally biased toward low complexity; sequence SPSPSQESLNSSK. 7 WD repeats span residues 608-646, 648-688, 693-732, 743-782, 787-826, 841-880, and 882-912; these read GHTA…CLCC, QHID…VALW, GQTK…YHTQ, RVGR…LSMK, VNSS…SKFT, AHNA…ENIP, and GALK…KNIS. The disordered stretch occupies residues 861–882; it reads AETSSEKQEGDQAEPVENIPSG.

Its subcellular location is the cytoplasm. It is found in the cytosol. It localises to the perinuclear region. The protein localises to the endosome membrane. The protein resides in the golgi apparatus. Its subcellular location is the trans-Golgi network. Downstream effector for rab11. May be involved in vesicle recycling. May also be involved in the inhibition of the intracellular ciliogenesis pathway. The protein is WD repeat-containing protein 44 (wdr44) of Xenopus laevis (African clawed frog).